We begin with the raw amino-acid sequence, 88 residues long: FXYD domain-containing ion transport regulator 3 (88 aa).

The N-terminal stretch at Met1 to Ala17 is a signal peptide. Residues Leu18–Arg38 are Extracellular-facing. A helical membrane pass occupies residues Val39–Gly59. Topologically, residues Lys60–Cys88 are cytoplasmic. The segment at Ser66–Cys88 is disordered.

Belongs to the FXYD family. As to quaternary structure, regulatory subunit of the sodium/potassium-transporting ATPase which is composed of a catalytic alpha subunit, a non-catalytic beta subunit and an additional regulatory subunit. Interacts with catalytic alpha subunit ATP1A1. Also interacts with non-catalytic beta subunit ATP1B1. Interacts with the alpha1-beta1, alpha2-beta1 and alpha3-beta1 NKA isozymes. Glutathionylated.

Its subcellular location is the cell membrane. In terms of biological role, associates with and regulates the activity of the sodium/potassium-transporting ATPase (NKA) which transports Na(+) out of the cell and K(+) into the cell. Reduces glutathionylation of the NKA beta-1 subunit ATP1B1, thus reversing glutathionylation-mediated inhibition of ATP1B1. Induces a hyperpolarization-activated chloride current when expressed in Xenopus oocytes. In Sus scrofa (Pig), this protein is FXYD domain-containing ion transport regulator 3 (FXYD3).